The primary structure comprises 199 residues: Fe/S biogenesis protein NfuA (199 aa).

[4Fe-4S] cluster-binding residues include C156 and C159.

Belongs to the NfuA family. Homodimer. The cofactor is [4Fe-4S] cluster.

Its function is as follows. Involved in iron-sulfur cluster biogenesis. Binds a 4Fe-4S cluster, can transfer this cluster to apoproteins, and thereby intervenes in the maturation of Fe/S proteins. Could also act as a scaffold/chaperone for damaged Fe/S proteins. This chain is Fe/S biogenesis protein NfuA, found in Haemophilus ducreyi (strain 35000HP / ATCC 700724).